We begin with the raw amino-acid sequence, 197 residues long: UPF0314 protein NGR_c32320 (197 aa).

3 helical membrane passes run 16–36, 66–86, and 152–172; these read WIWLIACLGVVAIQILTQHLM, WYTPSHIIHGFLFYGLGYLLL, and LPVAVTVTIAIVLELFTGWII.

This sequence belongs to the UPF0314 family.

Its subcellular location is the cell membrane. This Sinorhizobium fredii (strain NBRC 101917 / NGR234) protein is UPF0314 protein NGR_c32320.